Reading from the N-terminus, the 404-residue chain is Protein translocase subunit SecF (404 aa).

Transmembrane regions (helical) follow at residues 15-35, 225-245, 246-266, 275-295, 327-347, and 355-375; these read KWYF…SMGA, LLAT…RFEL, IYGI…VGAF, LTVV…TIVV, ILTS…GGEV, and LVIG…PMLV.

Belongs to the SecD/SecF family. SecF subfamily. Forms a complex with SecD. Part of the essential Sec protein translocation apparatus which comprises SecA, SecYEG and auxiliary proteins SecDF. Other proteins may also be involved.

The protein resides in the cell inner membrane. Part of the Sec protein translocase complex. Interacts with the SecYEG preprotein conducting channel. SecDF uses the proton motive force (PMF) to complete protein translocation after the ATP-dependent function of SecA. The polypeptide is Protein translocase subunit SecF (Koribacter versatilis (strain Ellin345)).